The sequence spans 253 residues: 5'-nucleotidase SurE (253 aa).

Positions 8, 9, 39, and 95 each coordinate a divalent metal cation.

Belongs to the SurE nucleotidase family. A divalent metal cation is required as a cofactor.

It localises to the cytoplasm. It carries out the reaction a ribonucleoside 5'-phosphate + H2O = a ribonucleoside + phosphate. In terms of biological role, nucleotidase that shows phosphatase activity on nucleoside 5'-monophosphates. The protein is 5'-nucleotidase SurE of Clostridium beijerinckii (strain ATCC 51743 / NCIMB 8052) (Clostridium acetobutylicum).